The primary structure comprises 422 residues: Mannose-1-phosphate guanylyltransferase regulatory subunit alpha-A (422 aa).

The interval Leu-2–Ala-253 is substrate-binding domain. Positions 85 and 249 each coordinate GDP-alpha-D-mannose. The hexapeptide repeat domain stretch occupies residues Leu-275–Leu-422. Residues Thr-358–Ile-386 form a C-loop region.

It belongs to the transferase hexapeptide repeat family. In terms of assembly, component of the GMPPA-GMPPB mannose-1-phosphate guanylyltransferase complex composed of 4 gmppa subunits and 8 gmppb subunits; the complex is organized into three layers, a central layer made up of 2 gmppa dimers sandwiched between two layers each made up of 2 gmppb dimers.

Its pathway is nucleotide-sugar biosynthesis; GDP-alpha-D-mannose biosynthesis; GDP-alpha-D-mannose from alpha-D-mannose 1-phosphate (GTP route): step 1/1. Its function is as follows. Regulatory subunit of the GMPPA-GMPPB mannose-1-phosphate guanylyltransferase complex; reduces the catalytic activity of GMPPB when part of the complex. Mediates allosteric feedback inhibition of GMPPB catalytic activity upon binding GDP-alpha-D-mannose. Together with GMPPB regulates GDP-alpha-D-mannose levels. One of two paralogs (gmppaa and gmppab) that may have redundant functions. This Danio rerio (Zebrafish) protein is Mannose-1-phosphate guanylyltransferase regulatory subunit alpha-A (gmppaa).